A 122-amino-acid chain; its full sequence is Large ribosomal subunit protein uL14 (122 aa).

Belongs to the universal ribosomal protein uL14 family. As to quaternary structure, part of the 50S ribosomal subunit. Forms a cluster with proteins L3 and L19. In the 70S ribosome, L14 and L19 interact and together make contacts with the 16S rRNA in bridges B5 and B8.

Its function is as follows. Binds to 23S rRNA. Forms part of two intersubunit bridges in the 70S ribosome. The protein is Large ribosomal subunit protein uL14 of Sulfurihydrogenibium sp. (strain YO3AOP1).